Here is a 201-residue protein sequence, read N- to C-terminus: UPF0301 protein ROP_34500 (201 aa).

It belongs to the UPF0301 (AlgH) family.

The protein is UPF0301 protein ROP_34500 of Rhodococcus opacus (strain B4).